We begin with the raw amino-acid sequence, 258 residues long: Spindlin-2A (258 aa).

Over residues Met-1–Gly-23 the composition is skewed to low complexity. The segment at Met-1–Ile-49 is disordered. Basic residues predominate over residues Thr-28–Gly-39. Tudor-like domain stretches follow at residues Val-50–His-99, Ile-129–Leu-178, and Ile-210–Val-255. Histone H3K4me3 and H3R8me2a binding regions lie at residues Glu-138 and Asp-246 to His-248.

It belongs to the SPIN/STSY family. In terms of assembly, interacts with C11orf84/SPINDOC.

It is found in the nucleus. Its function is as follows. May be involved in the regulation of cell cycle progression. Exhibits H3K4me3-binding activity. The chain is Spindlin-2A (SPIN2A) from Homo sapiens (Human).